The primary structure comprises 385 residues: Polyketide synthase 1 (385 aa).

Cysteine 157 is an active-site residue.

The protein belongs to the thiolase-like superfamily. Chalcone/stilbene synthases family. In terms of tissue distribution, expressed in glandular trichomes.

It localises to the cytoplasm. Its function is as follows. Polyketide synthase responsible for the biosynthesis of secondary metabolites. The sequence is that of Polyketide synthase 1 (PKSG1) from Cannabis sativa (Hemp).